We begin with the raw amino-acid sequence, 274 residues long: Cytochrome b-c1 complex subunit Rieske, mitochondrial (274 aa).

The Mitochondrial matrix segment spans residues 79-103; sequence SHTDIKVPDFSEYRRLEVLDSTKSS. Residues 104–140 traverse the membrane as a helical segment; sequence RESSEARKGFSYLVTGVTTVGVAYAAKNAVTQFVSSM. Topologically, residues 141-274 are mitochondrial intermembrane; it reads SASADVLALA…FTSDDMVIVG (134 aa). Residues 187 to 272 enclose the Rieske domain; it reads EAAVELSQLR…YEFTSDDMVI (86 aa). Residues Cys-217, His-219, Cys-236, His-239, and Ser-241 each coordinate [2Fe-2S] cluster. Cysteines 222 and 238 form a disulfide.

It belongs to the Rieske iron-sulfur protein family. As to quaternary structure, component of the ubiquinol-cytochrome c oxidoreductase (cytochrome b-c1 complex, complex III, CIII), a multisubunit enzyme composed of 11 subunits. The complex is composed of 3 respiratory subunits cytochrome b, cytochrome c1 and Rieske protein UQCRFS1, 2 core protein subunits UQCRC1/QCR1 and UQCRC2/QCR2, and 6 low-molecular weight protein subunits UQCRH/QCR6, UQCRB/QCR7, UQCRQ/QCR8, UQCR10/QCR9, UQCR11/QCR10 and subunit 9, the cleavage product of Rieske protein UQCRFS1. The complex exists as an obligatory dimer and forms supercomplexes (SCs) in the inner mitochondrial membrane with NADH-ubiquinone oxidoreductase (complex I, CI) and cytochrome c oxidase (complex IV, CIV), resulting in different assemblies (supercomplex SCI(1)III(2)IV(1) and megacomplex MCI(2)III(2)IV(2)). Incorporation of the Rieske protein UQCRFS1 is the penultimate step in complex III assembly. Interacts with TTC19, which is involved in the clearance of UQCRFS1 fragments. Component of the ubiquinol-cytochrome c oxidoreductase (cytochrome b-c1 complex, complex III, CIII). Subunit 9 corresponds to the mitochondrial targeting sequence (MTS) of Rieske protein UQCRFS1. It is retained after processing and incorporated inside complex III, where it remains bound to the complex and localizes between the 2 core subunits UQCRC1/QCR1 and UQCRC2/QCR2. The cofactor is [2Fe-2S] cluster. Proteolytic processing is necessary for the correct insertion of UQCRFS1 in the complex III dimer. Several fragments are generated during UQCRFS1 insertion, most probably due to the endogenous matrix-processing peptidase (MPP) activity of the 2 core protein subunits UQCRC1/QCR1 and UQCRC2/QCR2, which are homologous to the 2 mitochondrial-processing peptidase (MPP) subunits beta-MPP and alpha-MPP respectively. The action of the protease is also necessary for the clearance of the UQCRFS1 fragments.

The protein resides in the mitochondrion inner membrane. It carries out the reaction a quinol + 2 Fe(III)-[cytochrome c](out) = a quinone + 2 Fe(II)-[cytochrome c](out) + 2 H(+)(out). Component of the ubiquinol-cytochrome c oxidoreductase, a multisubunit transmembrane complex that is part of the mitochondrial electron transport chain which drives oxidative phosphorylation. The respiratory chain contains 3 multisubunit complexes succinate dehydrogenase (complex II, CII), ubiquinol-cytochrome c oxidoreductase (cytochrome b-c1 complex, complex III, CIII) and cytochrome c oxidase (complex IV, CIV), that cooperate to transfer electrons derived from NADH and succinate to molecular oxygen, creating an electrochemical gradient over the inner membrane that drives transmembrane transport and the ATP synthase. The cytochrome b-c1 complex catalyzes electron transfer from ubiquinol to cytochrome c, linking this redox reaction to translocation of protons across the mitochondrial inner membrane, with protons being carried across the membrane as hydrogens on the quinol. In the process called Q cycle, 2 protons are consumed from the matrix, 4 protons are released into the intermembrane space and 2 electrons are passed to cytochrome c. The Rieske protein is a catalytic core subunit containing a [2Fe-2S] iron-sulfur cluster. It cycles between 2 conformational states during catalysis to transfer electrons from the quinol bound in the Q(0) site in cytochrome b to cytochrome c1. Incorporation of UQCRFS1 is the penultimate step in complex III assembly. Functionally, component of the ubiquinol-cytochrome c oxidoreductase (cytochrome b-c1 complex, complex III, CIII). UQCRFS1 undergoes proteolytic processing once it is incorporated in the complex III dimer. One of the fragments, called subunit 9, corresponds to its mitochondrial targeting sequence (MTS). The proteolytic processing is necessary for the correct insertion of UQCRFS1 in the complex III dimer, but the persistence of UQCRFS1-derived fragments may prevent newly imported UQCRFS1 to be processed and assembled into complex III and is detrimental for the complex III structure and function. The sequence is that of Cytochrome b-c1 complex subunit Rieske, mitochondrial (UQCRFS1) from Gorilla gorilla gorilla (Western lowland gorilla).